The following is a 412-amino-acid chain: Branched-chain alpha-ketoacid dehydrogenase kinase (412 aa).

Residues 1 to 30 (MILASVLRSGPGGGLPLRPLLGPALALRAR) constitute a mitochondrion transit peptide. At Ser-31 the chain carries Phosphoserine. The residue at position 52 (Ser-52) is a Phosphoserine; by autocatalysis. The region spanning 159-404 (LDDHKDVVTL…DVYLRLRHID (246 aa)) is the Histidine kinase domain. Lys-192 and Lys-233 each carry N6-acetyllysine. Residues Asn-279 and Asp-315 each coordinate ATP. Position 279 (Asn-279) interacts with Mg(2+). K(+) contacts are provided by Val-328, Asp-330, and Phe-333. ATP contacts are provided by Thr-334 and Thr-335. 2 positions are modified to phosphoserine: Ser-356 and Ser-360. ATP-binding residues include His-364, Gly-367, and Leu-370. Gly-367 serves as a coordination point for K(+).

Belongs to the PDK/BCKDK protein kinase family. Homodimer. Homotetramer. Dimerizes through interaction of two opposing nucleotide-binding domains. Interacts with E2 component of the branched-chain alpha-ketoacid dehydrogenase (BCKDH) complex. Competes with BCKDK for binding to the E2 component; this interaction is modulated by branched-chain alpha-keto acids. At steady state, BCKDH holoenzyme contains BCKDK and BCKDHA is phosphorylated. In response to high levels of branched-chain alpha-keto acids, the inhibitory BCKDK is replaced by activating PPM1K leading to BCKDHA dephosphorylation and BCAA degradation. Post-translationally, autophosphorylated. As to expression, ubiquitous.

The protein localises to the mitochondrion matrix. It catalyses the reaction L-seryl-[3-methyl-2-oxobutanoate dehydrogenase] + ATP = O-phospho-L-seryl-[3-methyl-2-oxobutanoate dehydrogenase] + ADP + H(+). The catalysed reaction is L-seryl-[protein] + ATP = O-phospho-L-seryl-[protein] + ADP + H(+). The protein operates within protein modification. Its activity is regulated as follows. Allosterically inhibited by certain thiazoles and thiophenes: thiazoles increase interaction with DBT/BCKDH-E2, whereas thiophenes reduce this interaction. Inhibited by 3,6- dichlorobenzo[b]thiophene-2-carboxylic acid (BT2). The ATP binding is mediated by both potassium and magnesium ions. In terms of biological role, serine/threonine-protein kinase component of macronutrients metabolism. Forms a functional kinase and phosphatase pair with PPM1K, serving as a metabolic regulatory node that coordinates branched-chain amino acids (BCAAs) with glucose and lipid metabolism via two distinct phosphoprotein targets: mitochondrial BCKDHA subunit of the branched-chain alpha-ketoacid dehydrogenase (BCKDH) complex and cytosolic ACLY, a lipogenic enzyme of Krebs cycle. Phosphorylates and inactivates mitochondrial BCKDH complex a multisubunit complex consisting of three multimeric components each involved in different steps of BCAA catabolism: E1 composed of BCKDHA and BCKDHB, E2 core composed of DBT monomers, and E3 composed of DLD monomers. Associates with the E2 component of BCKDH complex and phosphorylates BCKDHA on Ser-337, leading to conformational changes that interrupt substrate channeling between E1 and E2 and inactivates the BCKDH complex. Phosphorylates ACLY on Ser-455 in response to changes in cellular carbohydrate abundance such as occurs during fasting to feeding metabolic transition. Refeeding stimulates MLXIPL/ChREBP transcription factor, leading to increased BCKDK to PPM1K expression ratio, phosphorylation and activation of ACLY that ultimately results in the generation of malonyl-CoA and oxaloacetate immediate substrates of de novo lipogenesis and glucogenesis, respectively. Recognizes phosphosites having SxxE/D canonical motif. The sequence is that of Branched-chain alpha-ketoacid dehydrogenase kinase from Homo sapiens (Human).